Here is a 312-residue protein sequence, read N- to C-terminus: MAQPYPPAQYPPPPQNGIPAEYAPPPPHPTQDYSGQTPVPTEHGMTLYTPAQTHPEQPGSEASTQPIAGTQTVPQTDEAAQTDSQPLHPSDPTEKQQPKRLHVSNIPFRFRDPDLRQMFGQFGKILDVEIIFNERGSKGFGFVTFETSSDADRAREKLNGTIVEGRKIEVNNATARVMTNKKTGNPYTNGWKLNPVVGAVYGPEFYAVTGFPYPTTGTAVAYRGAHLRGRGRAVYNTFRAAPPPPPIPTYGAVVYQDGFYGAEIYGGYAAYRYAQPAAAAAAYSDSYGRVYAAADPYHHTIGPAATYSIGTM.

The segment covering 1-29 (MAQPYPPAQYPPPPQNGIPAEYAPPPPHP) has biased composition (pro residues). The segment at 1–104 (MAQPYPPAQY…KQQPKRLHVS (104 aa)) is disordered. Residues 49–87 (TPAQTHPEQPGSEASTQPIAGTQTVPQTDEAAQTDSQPL) show a composition bias toward polar residues. Positions 100–175 (RLHVSNIPFR…RKIEVNNATA (76 aa)) constitute an RRM domain. An Asymmetric dimethylarginine; alternate modification is found at R223. R223 bears the Omega-N-methylarginine; alternate mark. R272 carries the asymmetric dimethylarginine modification.

The protein localises to the nucleus. Its subcellular location is the cytoplasm. In terms of biological role, pre-mRNA alternative splicing regulator. Regulates alternative splicing of RBFOX2 to enhance the production of mRNA species that are targeted for nonsense-mediated decay (NMD). The protein is RNA binding protein fox-1 homolog 3 (RBFOX3) of Homo sapiens (Human).